A 361-amino-acid polypeptide reads, in one-letter code: Cyclin-Y-like protein 2 (361 aa).

Residues 204–286 enclose the Cyclin N-terminal domain; sequence MRLTAEFAIV…QFLKLINYNN (83 aa).

It belongs to the cyclin family. Cyclin Y subfamily.

The protein is Cyclin-Y-like protein 2 (CCNYL2) of Homo sapiens (Human).